Consider the following 445-residue polypeptide: 6-phosphogluconate dehydrogenase, decarboxylating (445 aa).

NADP(+) is bound by residues 1–4 (AVMG), 22–24 (NRS), 63–65 (VKA), and Asn-91. Substrate contacts are provided by residues Asn-91 and 117–119 (SGG). Lys-172 serves as the catalytic Proton acceptor. 175–176 (HN) serves as a coordination point for substrate. The Proton donor role is filled by Glu-179. The substrate site is built by Tyr-180, Lys-249, Arg-276, Arg-434, and His-440.

It belongs to the 6-phosphogluconate dehydrogenase family. Homodimer.

The enzyme catalyses 6-phospho-D-gluconate + NADP(+) = D-ribulose 5-phosphate + CO2 + NADPH. The protein operates within carbohydrate degradation; pentose phosphate pathway; D-ribulose 5-phosphate from D-glucose 6-phosphate (oxidative stage): step 3/3. Functionally, catalyzes the oxidative decarboxylation of 6-phosphogluconate to ribulose 5-phosphate and CO(2), with concomitant reduction of NADP to NADPH. This Raoultella terrigena (Klebsiella terrigena) protein is 6-phosphogluconate dehydrogenase, decarboxylating (gnd).